Here is a 498-residue protein sequence, read N- to C-terminus: Zinc finger protein 79 (498 aa).

Residues 1 to 23 (MLEEGVLPSPGPALPQEENTGEE) form a disordered region. Residues 38-109 (TFFSSVTVAF…EGEDLRSPSP (72 aa)) enclose the KRAB domain. C2H2-type zinc fingers lie at residues 193–215 (YACN…QKSH), 221–243 (YECS…QRIH), 249–271 (YKCS…QRTH), 277–299 (YRCS…QRIH), 305–327 (YECS…QRTH), 333–355 (YKCS…QRIH), 361–383 (YRCA…QRTH), 389–411 (YKCS…QKTH), 417–439 (YKCN…HIIH), 445–467 (YECN…QRIH), and 473–495 (YECS…QRLH).

The protein belongs to the krueppel C2H2-type zinc-finger protein family.

It localises to the nucleus. Functionally, may be involved in transcriptional regulation. The sequence is that of Zinc finger protein 79 (ZNF79) from Homo sapiens (Human).